A 634-amino-acid polypeptide reads, in one-letter code: Chaperone protein HtpG (634 aa).

Residues 1–344 (MSETVSHNKE…SNDLPLNVSR (344 aa)) form an a; substrate-binding region. Residues 345 to 561 (EILQDNKVTQ…DFEMGTQMAK (217 aa)) form a b region. Positions 562-634 (LLEAAGQAVP…GAINKLLTKV (73 aa)) are c.

Belongs to the heat shock protein 90 family. In terms of assembly, homodimer.

It localises to the cytoplasm. In terms of biological role, molecular chaperone. Has ATPase activity. This chain is Chaperone protein HtpG, found in Vibrio campbellii (strain ATCC BAA-1116).